The sequence spans 434 residues: Putative D-alanyl-D-alanine carboxypeptidase (434 aa).

Residues 7-25 (YLSLLAVSCSVSAAKYPVL) traverse the membrane as a helical; Signal-anchor segment.

Belongs to the peptidase S12 family. YfeW subfamily.

Its subcellular location is the cell inner membrane. It carries out the reaction Preferential cleavage: (Ac)2-L-Lys-D-Ala-|-D-Ala. Also transpeptidation of peptidyl-alanyl moieties that are N-acyl substituents of D-alanine.. The protein is Putative D-alanyl-D-alanine carboxypeptidase of Escherichia coli O157:H7.